Here is a 244-residue protein sequence, read N- to C-terminus: Krueppel-like factor 9 (244 aa).

2 disordered regions span residues 26 to 51 and 79 to 143; these read EHGG…GDPG and PSVC…EKRH. Positions 32–51 are enriched in basic and acidic residues; it reads EAERLRLPEREVTKEHGDPG. A Phosphoserine modification is found at Ser122. A compositionally biased stretch (basic residues) spans 134–143; it reads KGKHASEKRH. 3 C2H2-type zinc fingers span residues 143-167, 173-197, and 203-225; these read HKCP…YRVH, FPCT…YRTH, and FRCP…ARRH.

It belongs to the Sp1 C2H2-type zinc-finger protein family. In terms of assembly, interacts with ZZEF1.

It is found in the nucleus. Its function is as follows. Transcription factor that binds to GC box promoter elements. Selectively activates mRNA synthesis from genes containing tandem repeats of GC boxes but represses genes with a single GC box. Acts as an epidermal circadian transcription factor regulating keratinocyte proliferation. The sequence is that of Krueppel-like factor 9 (Klf9) from Mus musculus (Mouse).